Reading from the N-terminus, the 645-residue chain is MSVINCEEVKRDEFHTEKYYESYNIFGAHVVTEDEIQGVRFTVWAPHAKAMSVVGDFNEWDYEQHKMLQVTEEGIWSLFIPHIEEGEIYKYAIETLAGDVILKADPYAIYAEVRPNTASVVFDIKGYEWNDKNWTRKKKKKPIYKEAMTVYELHFGSWKKKEDGTLYSYREMVEELIPYVVEHQFTHIEIMPLVEHPYDRSWGYQGTGYYAATSRFGTPHDLMYFVDECHKYGIGVILDWVPGHFCKDAHGLYLFDGTPTYEYKDKDVQENPVWGTVNFDLGKREVRNFLISNALFWMRYFHIDGFRVDAVANMLYWNKEGQEQSNEHAVSFLRELNEAVFAEDEDFLMTAEDSTAWPLVTTPTYEGGLGFNYKWNMGWMNDVLKYMECAPEYRKHIHEKMTFSLLYAYSENFILPLSHDEVVHGKKSLLNKMPGDYWDKFAQLRLLYGYFFTHPGKKLLFMGGEFGQFDEWKDLEDLDWNLHDFEMHRYMHDYFKELIALYKRSKPLWQLDHSPEGFQWIDANNNEQSIFSFIRQGDKQEDALVVVCNFTKATYENYKVGVPDFEYYNEILNSDAEQYGGSGQVNKKRLKTILEPYHNQAAHVEITIPPFGVSILRPVKTRKGSKKQDGSKTKVRSNVTSRGKR.

Catalysis depends on aspartate 309, which acts as the Nucleophile. Residue glutamate 352 is the Proton donor of the active site. The tract at residues 619–645 is disordered; it reads VKTRKGSKKQDGSKTKVRSNVTSRGKR. Positions 636-645 are enriched in polar residues; sequence RSNVTSRGKR.

The protein belongs to the glycosyl hydrolase 13 family. GlgB subfamily. As to quaternary structure, monomer.

The enzyme catalyses Transfers a segment of a (1-&gt;4)-alpha-D-glucan chain to a primary hydroxy group in a similar glucan chain.. The protein operates within glycan biosynthesis; glycogen biosynthesis. Its function is as follows. Catalyzes the formation of the alpha-1,6-glucosidic linkages in glycogen by scission of a 1,4-alpha-linked oligosaccharide from growing alpha-1,4-glucan chains and the subsequent attachment of the oligosaccharide to the alpha-1,6 position. This Bacillus cereus (strain G9842) protein is 1,4-alpha-glucan branching enzyme GlgB.